The chain runs to 686 residues: Leucine-rich repeat-containing protein 49 (686 aa).

7 LRR repeats span residues 113–134 (HLRL…SNLQ), 135–156 (KLIS…STLR), 157–178 (CLRV…ENLK), 179–200 (SLDV…NHLC), 201–222 (ELRV…NGLD), 223–244 (SLTE…DNLP), and 245–266 (CLQH…SCLA). In terms of domain architecture, LRRCT spans 279-317 (NPIAQESWYKHTVLQNMMQLRQLDMKRITEEERRMASVL). The stretch at 303–341 (MKRITEEERRMASVLAKKEEEKKRESHKQSLLKEKKRLT) forms a coiled coil. The segment at 360 to 388 (ATNEDRKDSDSPQDPCQIDGSTLSAFPEE) is disordered.

In terms of assembly, part of the neuronal tubulin polyglutamylase complex which contains TPGS1, TPGS2, TTLL1, LRRC49 and NICN1. Interacts with PCM1; TTLL1, TPGS1, TPGS2 and LRRC49.

Its subcellular location is the cytoplasm. It localises to the cytoskeleton. The protein localises to the microtubule organizing center. The protein resides in the centrosome. It is found in the centriolar satellite. In terms of biological role, subunit of the tubulin polyglutamylase complex (TPGC). The complex mediates cilia and flagella polyglutamylation which is essential for their biogenesis and motility. The protein is Leucine-rich repeat-containing protein 49 of Homo sapiens (Human).